A 1190-amino-acid chain; its full sequence is Tight junction protein 2 (1190 aa).

Phosphoserine is present on Ser-16. The 88-residue stretch at 33–120 (TVTLQKDSKR…VAAIVVKRPR (88 aa)) folds into the PDZ 1 domain. Phosphoserine is present on residues Ser-130, Ser-150, Ser-153, Ser-163, Ser-168, Ser-170, Ser-174, Ser-200, Ser-220, Ser-232, Ser-244, Ser-266, Ser-325, Ser-398, Ser-400, Ser-406, Ser-415, Ser-424, Ser-430, and Ser-431. Positions 152–306 (RSGYSERSRL…PEPRGRPGPI (155 aa)) are disordered. The segment covering 169-291 (RSWEDSPERG…PRSRSREHPH (123 aa)) has biased composition (basic and acidic residues). The PDZ 2 domain maps to 307 to 385 (GVLLMKSRAN…KLQLVVLRDS (79 aa)). Positions 408 to 506 (IESNRSFSPE…RPSPEDEAIY (99 aa)) are disordered. Basic and acidic residues predominate over residues 415–446 (SPEERRHQYSDYDYHSSSEKLKERPSSREDTP). Thr-455 carries the phosphothreonine modification. Position 499 is a phosphoserine (Ser-499). One can recognise a PDZ 3 domain in the interval 509-590 (NTKMVRFKKG…GEMVTILAQS (82 aa)). Residue Tyr-574 is modified to Phosphotyrosine. The region spanning 604–669 (GDSFFIRSHF…PNKSRAEQMA (66 aa)) is the SH3 domain. The Guanylate kinase-like domain maps to 678–876 (NAGDRADFWR…WFGSLKDTIQ (199 aa)). Ser-702 and Ser-902 each carry phosphoserine. Thr-905 is modified (phosphothreonine). A phosphoserine mark is found at Ser-913 and Ser-920. 2 disordered regions span residues 920 to 1079 (SDFE…KSVL) and 1105 to 1190 (NARI…DTEL). Phosphothreonine is present on residues Thr-925 and Thr-933. Positions 956–967 (VQHEESIRKPSP) are enriched in basic and acidic residues. 6 positions are modified to phosphoserine: Ser-966, Ser-978, Ser-986, Ser-1006, Ser-1067, and Ser-1068. Over residues 994-1014 (EPPKAKTQNKEESYDFSKSYE) the composition is skewed to basic and acidic residues. Residues 1060–1072 (EGEEVGESSEEQD) show a composition bias toward acidic residues. Tyr-1118 carries the phosphotyrosine modification. Thr-1131 is modified (phosphothreonine). Phosphoserine occurs at positions 1147 and 1159. The segment covering 1166–1175 (YRQQLSEHSK) has biased composition (basic and acidic residues). Residues 1188-1190 (TEL) are interaction with SCRIB.

Belongs to the MAGUK family. As to quaternary structure, homodimer. Interacts (via PDZ2 domain) with TJP1/ZO1 (via PDZ2 domain). Interacts with OCLN. Interacts with UBN1. Interacts with SAFB in the nucleus. Interacts with SCRIB. Interacts with USP53 (via the C-terminal region). Interacts with claudins, including CLDN1, CLDN2, CLDN3, CLDN5 and CLDN7. Interacts with CLDN18. Interacts (via N-terminus) with CTNNA1. In terms of tissue distribution, this protein is found in epithelial cell junctions. Isoform A1 is abundant in the heart and brain. Detected in brain and skeletal muscle. It is present almost exclusively in normal tissues. Isoform C1 is expressed at high level in the kidney, pancreas, heart and placenta. Not detected in brain and skeletal muscle. Found in normal as well as in most neoplastic tissues.

It localises to the cell junction. The protein resides in the adherens junction. Its subcellular location is the cell membrane. It is found in the tight junction. The protein localises to the nucleus. Its function is as follows. Plays a role in tight junctions and adherens junctions. Acts as a positive regulator of RANKL-induced osteoclast differentiation, potentially via mediating downstream transcriptional activity. In Homo sapiens (Human), this protein is Tight junction protein 2.